Reading from the N-terminus, the 486-residue chain is Glutamate--tRNA ligase (486 aa).

Positions 11 to 21 match the 'HIGH' region motif; that stretch reads PSPTGFLHIGG. C108, C110, C136, and H138 together coordinate Zn(2+). The short motif at 253–257 is the 'KMSKS' region element; sequence KLSKR. Residue K256 coordinates ATP.

It belongs to the class-I aminoacyl-tRNA synthetase family. Glutamate--tRNA ligase type 1 subfamily. Monomer. It depends on Zn(2+) as a cofactor.

It is found in the cytoplasm. The enzyme catalyses tRNA(Glu) + L-glutamate + ATP = L-glutamyl-tRNA(Glu) + AMP + diphosphate. Catalyzes the attachment of glutamate to tRNA(Glu) in a two-step reaction: glutamate is first activated by ATP to form Glu-AMP and then transferred to the acceptor end of tRNA(Glu). In Lysinibacillus sphaericus (strain C3-41), this protein is Glutamate--tRNA ligase.